We begin with the raw amino-acid sequence, 120 residues long: Small ribosomal subunit protein eS24 (120 aa).

A disordered region spans residues 101–120; the sequence is RDAGTKQKKGGSKGGQGAKG.

This sequence belongs to the eukaryotic ribosomal protein eS24 family.

The sequence is that of Small ribosomal subunit protein eS24 from Saccharolobus islandicus (strain M.16.27) (Sulfolobus islandicus).